We begin with the raw amino-acid sequence, 402 residues long: Acetylornithine aminotransferase (402 aa).

Pyridoxal 5'-phosphate is bound by residues 106-107 (GA) and F132. R135 contacts N(2)-acetyl-L-ornithine. A pyridoxal 5'-phosphate-binding site is contributed by 217–220 (DEVQ). At K247 the chain carries N6-(pyridoxal phosphate)lysine. T275 is a binding site for N(2)-acetyl-L-ornithine. T276 lines the pyridoxal 5'-phosphate pocket.

Belongs to the class-III pyridoxal-phosphate-dependent aminotransferase family. ArgD subfamily. In terms of assembly, homodimer. It depends on pyridoxal 5'-phosphate as a cofactor.

The protein resides in the cytoplasm. The catalysed reaction is N(2)-acetyl-L-ornithine + 2-oxoglutarate = N-acetyl-L-glutamate 5-semialdehyde + L-glutamate. It functions in the pathway amino-acid biosynthesis; L-arginine biosynthesis; N(2)-acetyl-L-ornithine from L-glutamate: step 4/4. The chain is Acetylornithine aminotransferase from Streptomyces coelicolor (strain ATCC BAA-471 / A3(2) / M145).